The sequence spans 292 residues: AKT-interacting protein (292 aa).

Residues 1–64 are disordered; the sequence is MNPFWNMSSA…ISPSPSVQPT (64 aa). Residues 14 to 23 show a composition bias toward basic and acidic residues; that stretch reads KRSDNDEKIA. A UBC core domain is found at 75-223; sequence YLEYSLLAEF…VVDSVKLCNS (149 aa). Residues 273–292 form a disordered region; sequence SWVKPGSVLPFSKEENSLQT.

Belongs to the ubiquitin-conjugating enzyme family. FTS subfamily.

The protein localises to the cytoplasm. The protein resides in the cell membrane. Its function is as follows. May function to promote vesicle trafficking and/or fusion. May also regulate apoptosis. The chain is AKT-interacting protein (aktip) from Xenopus tropicalis (Western clawed frog).